We begin with the raw amino-acid sequence, 211 residues long: Holliday junction branch migration complex subunit RuvA (211 aa).

A domain I region spans residues 1–70 (MIQFLQGQVV…QDQIALFGFG (70 aa)). The domain II stretch occupies residues 71 to 149 (RLAERDLFGQ…QWHKLQMGTG (79 aa)). Residues 150 to 158 (ETDSTLPTT) form a flexible linker region. The segment at 158–211 (TALLEDLEMTLLALGYTQTEIQQAIAMVSQVPDVAQSEDPEVWIRQAIGWLSDH) is domain III.

The protein belongs to the RuvA family. In terms of assembly, homotetramer. Forms an RuvA(8)-RuvB(12)-Holliday junction (HJ) complex. HJ DNA is sandwiched between 2 RuvA tetramers; dsDNA enters through RuvA and exits via RuvB. An RuvB hexamer assembles on each DNA strand where it exits the tetramer. Each RuvB hexamer is contacted by two RuvA subunits (via domain III) on 2 adjacent RuvB subunits; this complex drives branch migration. In the full resolvosome a probable DNA-RuvA(4)-RuvB(12)-RuvC(2) complex forms which resolves the HJ.

The protein resides in the cytoplasm. In terms of biological role, the RuvA-RuvB-RuvC complex processes Holliday junction (HJ) DNA during genetic recombination and DNA repair, while the RuvA-RuvB complex plays an important role in the rescue of blocked DNA replication forks via replication fork reversal (RFR). RuvA specifically binds to HJ cruciform DNA, conferring on it an open structure. The RuvB hexamer acts as an ATP-dependent pump, pulling dsDNA into and through the RuvAB complex. HJ branch migration allows RuvC to scan DNA until it finds its consensus sequence, where it cleaves and resolves the cruciform DNA. This Synechocystis sp. (strain ATCC 27184 / PCC 6803 / Kazusa) protein is Holliday junction branch migration complex subunit RuvA.